Consider the following 99-residue polypeptide: Ferredoxin, heterocyst (99 aa).

Positions 4 to 96 constitute a 2Fe-2S ferredoxin-type domain; sequence YQVRLINKKE…NCTIKTHQEP (93 aa). [2Fe-2S] cluster-binding residues include cysteine 42, cysteine 47, cysteine 50, and cysteine 80.

It belongs to the 2Fe2S plant-type ferredoxin family. It depends on [2Fe-2S] cluster as a cofactor.

In terms of biological role, ferredoxins are iron-sulfur proteins that transfer electrons in a wide variety of metabolic reactions. The protein is Ferredoxin, heterocyst (fdxH) of Microchaete diplosiphon (Fremyella diplosiphon).